The following is a 425-amino-acid chain: Glutamyl-tRNA reductase (425 aa).

Substrate is bound by residues 49 to 52, Ser109, 114 to 116, and Gln120; these read TCNR and EGQ. Cys50 acts as the Nucleophile in catalysis. Position 189–194 (189–194) interacts with NADP(+); sequence GAGKMS.

The protein belongs to the glutamyl-tRNA reductase family. As to quaternary structure, homodimer.

It catalyses the reaction (S)-4-amino-5-oxopentanoate + tRNA(Glu) + NADP(+) = L-glutamyl-tRNA(Glu) + NADPH + H(+). The protein operates within porphyrin-containing compound metabolism; protoporphyrin-IX biosynthesis; 5-aminolevulinate from L-glutamyl-tRNA(Glu): step 1/2. Its pathway is porphyrin-containing compound metabolism; chlorophyll biosynthesis. In terms of biological role, catalyzes the NADPH-dependent reduction of glutamyl-tRNA(Glu) to glutamate 1-semialdehyde (GSA). This Picosynechococcus sp. (strain ATCC 27264 / PCC 7002 / PR-6) (Agmenellum quadruplicatum) protein is Glutamyl-tRNA reductase.